The sequence spans 229 residues: Sodium channel modifier 1 (229 aa).

Ser-2 carries the post-translational modification Phosphoserine. The Bipartite nuclear localization signal signature appears at 4 to 20 (KREGDDWSQLNVLKKRR). The segment at 42–74 (FACAICPHRPVLDTLAMLTAHRAGKKHLSSLKL) adopts a Matrin-type zinc-finger fold. Lys-67 participates in a covalent cross-link: Glycyl lysine isopeptide (Lys-Gly) (interchain with G-Cter in SUMO2). Disordered stretches follow at residues 80–105 (QTGK…EAPL) and 128–187 (RRKH…TKRR). A compositionally biased stretch (polar residues) spans 82–92 (GKGTEQNPRQQ). A compositionally biased stretch (basic and acidic residues) spans 157-171 (ISKEPEPRERSDAKE). 2 positions are modified to phosphoserine: Ser-182 and Ser-218. The interval 187–229 (RVLNHYLTLRSSGWVPDGRGRWIKDENVEFDSDEEEPPDLPLD) is required for interaction with LUC7L2.

In terms of assembly, component of the minor spliceosome. Within this complex, interacts with RNF113A, as well as with SF3B1/SF3b155, SF3B2/SF3b145, SF3B3/SF3b130 and CDC5L. May interact with LUC7L2 and SNRNP70.

The protein localises to the nucleus. It is found in the nucleoplasm. Its subcellular location is the nucleus speckle. Functionally, as a component of the minor spliceosome, involved in the splicing of U12-type introns in pre-mRNAs. Plays a role in the regulation of primary cilia length and Hedgehog signaling. The polypeptide is Sodium channel modifier 1 (Scnm1) (Mus musculus (Mouse)).